Consider the following 262-residue polypeptide: tRNA pseudouridine synthase B (262 aa).

Asp-77 (nucleophile) is an active-site residue.

It belongs to the pseudouridine synthase TruB family. Type 1 subfamily.

It carries out the reaction uridine(55) in tRNA = pseudouridine(55) in tRNA. Responsible for synthesis of pseudouridine from uracil-55 in the psi GC loop of transfer RNAs. The polypeptide is tRNA pseudouridine synthase B (Protochlamydia amoebophila (strain UWE25)).